The chain runs to 445 residues: Argininosuccinate synthase (445 aa).

Residues 17–25 (AFSGGLDTS) and A43 contribute to the ATP site. Position 99 (Y99) interacts with L-citrulline. ATP contacts are provided by G129 and T131. Positions 131, 135, and 136 each coordinate L-aspartate. N135 is a binding site for L-citrulline. D136 is a binding site for ATP. R139 and S192 together coordinate L-citrulline. Position 194 (D194) interacts with ATP. Residues T201, E203, and E280 each contribute to the L-citrulline site.

It belongs to the argininosuccinate synthase family. Type 2 subfamily. As to quaternary structure, homotetramer.

It localises to the cytoplasm. The enzyme catalyses L-citrulline + L-aspartate + ATP = 2-(N(omega)-L-arginino)succinate + AMP + diphosphate + H(+). It participates in amino-acid biosynthesis; L-arginine biosynthesis; L-arginine from L-ornithine and carbamoyl phosphate: step 2/3. This is Argininosuccinate synthase from Acidobacterium capsulatum (strain ATCC 51196 / DSM 11244 / BCRC 80197 / JCM 7670 / NBRC 15755 / NCIMB 13165 / 161).